The primary structure comprises 512 residues: Histidine ammonia-lyase (512 aa).

A cross-link (5-imidazolinone (Ala-Gly)) is located at residues 144-146 (ASG). A 2,3-didehydroalanine (Ser) modification is found at Ser145.

This sequence belongs to the PAL/histidase family. Contains an active site 4-methylidene-imidazol-5-one (MIO), which is formed autocatalytically by cyclization and dehydration of residues Ala-Ser-Gly.

The protein resides in the cytoplasm. The enzyme catalyses L-histidine = trans-urocanate + NH4(+). The protein operates within amino-acid degradation; L-histidine degradation into L-glutamate; N-formimidoyl-L-glutamate from L-histidine: step 1/3. The chain is Histidine ammonia-lyase from Desulfotalea psychrophila (strain LSv54 / DSM 12343).